The chain runs to 99 residues: DNA-directed RNA polymerase subunit Rpo11 (99 aa).

This sequence belongs to the archaeal Rpo11/eukaryotic RPB11/RPC19 RNA polymerase subunit family. In terms of assembly, part of the RNA polymerase complex. Forms an Rpo3-Rpo10-Rpo11-Rpo12 complex upon coexpression.

It localises to the cytoplasm. The enzyme catalyses RNA(n) + a ribonucleoside 5'-triphosphate = RNA(n+1) + diphosphate. Its function is as follows. DNA-dependent RNA polymerase (RNAP) catalyzes the transcription of DNA into RNA using the four ribonucleoside triphosphates as substrates. The polypeptide is DNA-directed RNA polymerase subunit Rpo11 (Methanocaldococcus jannaschii (strain ATCC 43067 / DSM 2661 / JAL-1 / JCM 10045 / NBRC 100440) (Methanococcus jannaschii)).